The following is a 271-amino-acid chain: Formamidopyrimidine-DNA glycosylase (271 aa).

P2 functions as the Schiff-base intermediate with DNA in the catalytic mechanism. The active-site Proton donor is the E3. K57 functions as the Proton donor; for beta-elimination activity in the catalytic mechanism. Residues H90, R109, and K151 each contribute to the DNA site. The FPG-type zinc-finger motif lies at 236-270 (HVYSRGGETCTSCGNLLSEIRLGQRTTVFCGICQT). The active-site Proton donor; for delta-elimination activity is the R260.

The protein belongs to the FPG family. Monomer. Zn(2+) is required as a cofactor.

It carries out the reaction Hydrolysis of DNA containing ring-opened 7-methylguanine residues, releasing 2,6-diamino-4-hydroxy-5-(N-methyl)formamidopyrimidine.. It catalyses the reaction 2'-deoxyribonucleotide-(2'-deoxyribose 5'-phosphate)-2'-deoxyribonucleotide-DNA = a 3'-end 2'-deoxyribonucleotide-(2,3-dehydro-2,3-deoxyribose 5'-phosphate)-DNA + a 5'-end 5'-phospho-2'-deoxyribonucleoside-DNA + H(+). In terms of biological role, involved in base excision repair of DNA damaged by oxidation or by mutagenic agents. Acts as a DNA glycosylase that recognizes and removes damaged bases. Has a preference for oxidized purines, such as 7,8-dihydro-8-oxoguanine (8-oxoG). Has AP (apurinic/apyrimidinic) lyase activity and introduces nicks in the DNA strand. Cleaves the DNA backbone by beta-delta elimination to generate a single-strand break at the site of the removed base with both 3'- and 5'-phosphates. The protein is Formamidopyrimidine-DNA glycosylase of Shewanella baltica (strain OS195).